Consider the following 246-residue polypeptide: Small ribosomal subunit protein uS2 (246 aa).

The protein belongs to the universal ribosomal protein uS2 family.

This Saccharophagus degradans (strain 2-40 / ATCC 43961 / DSM 17024) protein is Small ribosomal subunit protein uS2.